The primary structure comprises 563 residues: PTS system fructose-specific EIIB'BC component (563 aa).

PTS EIIB type-2 domains follow at residues 1–85 and 104–201; these read MKTL…KGHA and KRVV…KAVA. Cysteine 112 acts as the Phosphocysteine intermediate; for EIIB activity in catalysis. Cysteine 112 carries the post-translational modification Phosphocysteine; by EIIA. Positions 226–561 constitute a PTS EIIC type-2 domain; that stretch reads AYRHLLTGVS…KRPEVDAVAK (336 aa). The next 9 helical transmembrane spans lie at 236-256, 274-294, 304-324, 349-369, 382-402, 430-450, 463-483, 489-509, and 518-538; these read YMLPMVVAGGLCIALSFAFGI, GGSAFALMVPVLAGYIAFSIA, IGGMLAVSTGSGFIGGIIAGF, ILIIPLISSLVVGLAMIYLIG, WLQTMGTANAVLLGAILGGMM, MAAIMAAGMVPPLAMGLATMV, GKAALVLGLCFISEGAIPFAA, VLPCCIVGGALTGAISMAIGA, and LFVLLIPGAITPVLGYLVAII.

The protein resides in the cell inner membrane. The catalysed reaction is D-fructose(out) + N(pros)-phospho-L-histidyl-[protein] = D-fructose 1-phosphate(in) + L-histidyl-[protein]. In terms of biological role, the phosphoenolpyruvate-dependent sugar phosphotransferase system (sugar PTS), a major carbohydrate active transport system, catalyzes the phosphorylation of incoming sugar substrates concomitantly with their translocation across the cell membrane. The enzyme II FruAB PTS system is involved in fructose transport. The protein is PTS system fructose-specific EIIB'BC component of Escherichia coli (strain K12).